A 595-amino-acid chain; its full sequence is CDPK-related kinase 3 (595 aa).

Residues 1–131 form a disordered region; that stretch reads MGQCYGKVNQ…GTEPEQSLDK (131 aa). Glycine 2 is lipidated: N-myristoyl glycine. The segment covering 20 to 37 has biased composition (polar residues); the sequence is NTTTYVVSGDGNQIQPLT. Residues 111 to 124 show a composition bias toward basic and acidic residues; sequence KPKEGPIPEERGTE. The Protein kinase domain maps to 143–405; the sequence is YELGKEVGRG…AVQALTHPWL (263 aa). ATP-binding positions include 149 to 157 and lysine 175; that span reads VGRGHFGHT. Catalysis depends on aspartate 271, which acts as the Proton acceptor. Residue serine 311 is modified to Phosphoserine. Serine 353 is modified (phosphoserine; by CPK1 and CPK34). The segment at 409–439 is autoinhibitory domain; the sequence is SRVIPLDILIYKLVKAYLHATPLRRAALKAL. The calmodulin binding (CaMBD) stretch occupies residues 428 to 448; sequence ATPLRRAALKALAKALTENEL. 4 consecutive EF-hand domains span residues 446–482, 483–518, 519–558, and 559–588; these read NELV…ATDA, MRES…IHQL, EAVD…GASA, and YGHL…VTLR. The Ca(2+) site is built by asparagine 461, aspartate 463, serine 465, lysine 502, glutamate 507, asparagine 540, glutamate 547, serine 568, aspartate 570, and lysine 572. Serine 574 is subject to Phosphoserine.

It belongs to the protein kinase superfamily. Ser/Thr protein kinase family. CDPK subfamily. Binds calmodulin (CaM) in a calcium-dependent manner. Interacts with GLN1-1. In terms of processing, autophosphorylated. In terms of tissue distribution, ubiquitously expressed with higher levels in siliques and roots, especially at the root cap. Particularly present in vascular bundles of stems and leaves.

The protein resides in the cytoplasm. The protein localises to the membrane. The enzyme catalyses L-seryl-[protein] + ATP = O-phospho-L-seryl-[protein] + ADP + H(+). It catalyses the reaction L-threonyl-[protein] + ATP = O-phospho-L-threonyl-[protein] + ADP + H(+). Not activated by calcium. Autophosphorylation may play an important role in the regulation of the kinase activity. Stimulated by magnesium ions (optimum at 10-15 mM) and manganese ions. In terms of biological role, may play a role in signal transduction pathways that involve calcium as a second messenger. Serine/threonine kinase that phosphorylates histone H3 an GLN1-1. In Arabidopsis thaliana (Mouse-ear cress), this protein is CDPK-related kinase 3 (CRK3).